The primary structure comprises 94 residues: CRISPR-associated endoribonuclease Cas2 1 (94 aa).

Position 8 (aspartate 8) interacts with Mg(2+).

Belongs to the CRISPR-associated endoribonuclease Cas2 protein family. As to quaternary structure, homodimer, forms a heterotetramer with a Cas1 homodimer. Mg(2+) serves as cofactor.

Its function is as follows. CRISPR (clustered regularly interspaced short palindromic repeat), is an adaptive immune system that provides protection against mobile genetic elements (viruses, transposable elements and conjugative plasmids). CRISPR clusters contain sequences complementary to antecedent mobile elements and target invading nucleic acids. CRISPR clusters are transcribed and processed into CRISPR RNA (crRNA). Involved in the integration of spacer DNA into the CRISPR cassette. Functions as a ssRNA-specific endoribonuclease. This Archaeoglobus fulgidus (strain ATCC 49558 / DSM 4304 / JCM 9628 / NBRC 100126 / VC-16) protein is CRISPR-associated endoribonuclease Cas2 1 (cas21).